Reading from the N-terminus, the 474-residue chain is Dihydrolipoyl dehydrogenase (474 aa).

FAD-binding positions include 34–51 (EGNPYDDPKGEARLGGTC), Lys-60, and Gly-124. Cys-51 and Cys-56 are joined by a disulfide. NAD(+) contacts are provided by residues 189–193 (GAGVI), Glu-212, Val-246, and 278–281 (SVGR). Residues Asp-321 and Ala-329 each contribute to the FAD site. The active-site Proton acceptor is the His-453.

This sequence belongs to the class-I pyridine nucleotide-disulfide oxidoreductase family. FAD serves as cofactor.

It localises to the cytoplasm. It catalyses the reaction N(6)-[(R)-dihydrolipoyl]-L-lysyl-[protein] + NAD(+) = N(6)-[(R)-lipoyl]-L-lysyl-[protein] + NADH + H(+). Functionally, the branched-chain alpha-keto dehydrogenase complex catalyzes the overall conversion of alpha-keto acids to acyl-CoA and CO(2). It contains multiple copies of 3 enzymatic components: branched-chain alpha-keto acid decarboxylase (E1), lipoamide acyltransferase (E2) and lipoamide dehydrogenase (E3). The protein is Dihydrolipoyl dehydrogenase (odhL) of Cupriavidus necator (strain ATCC 17699 / DSM 428 / KCTC 22496 / NCIMB 10442 / H16 / Stanier 337) (Ralstonia eutropha).